An 817-amino-acid chain; its full sequence is Putative ATP-dependent RNA helicase R350 (817 aa).

Residues 1-29 (MNRRNRSNDLNPEPSIENPNNQIAEEFPG) form a disordered region. Polar residues predominate over residues 17–29 (ENPNNQIAEEFPG). A Helicase ATP-binding domain is found at 93–271 (LNPQGPYTSI…ALMFNLLRPG (179 aa)). 106-113 (HGLGSGKT) contributes to the ATP binding site. The DEAH box motif lies at 206 to 209 (DEAH). Residues 495–661 (LAIAFMTYIS…STDEYVEDQA (167 aa)) enclose the Helicase C-terminal domain.

The protein belongs to the DEAD box helicase family. DEAH subfamily.

Its subcellular location is the virion. It catalyses the reaction ATP + H2O = ADP + phosphate + H(+). The sequence is that of Putative ATP-dependent RNA helicase R350 from Acanthamoeba polyphaga mimivirus (APMV).